Consider the following 222-residue polypeptide: Probable fructose-6-phosphate aldolase (222 aa).

Catalysis depends on K87, which acts as the Schiff-base intermediate with substrate.

It belongs to the transaldolase family. Type 3A subfamily.

The protein localises to the cytoplasm. It carries out the reaction beta-D-fructose 6-phosphate = dihydroxyacetone + D-glyceraldehyde 3-phosphate. In terms of biological role, catalyzes the reversible formation of fructose 6-phosphate from dihydroxyacetone and D-glyceraldehyde 3-phosphate via an aldolization reaction. The polypeptide is Probable fructose-6-phosphate aldolase (Streptococcus pneumoniae (strain ATCC 700669 / Spain 23F-1)).